Here is a 160-residue protein sequence, read N- to C-terminus: Small ribosomal subunit protein uS9 (160 aa).

Residues 1–18 (MTDTSNSLQDLGTLTGAP) show a composition bias toward polar residues. The interval 1-37 (MTDTSNSLQDLGTLTGAPSAQPVKSVEPKIDAQGRAY) is disordered.

It belongs to the universal ribosomal protein uS9 family.

The chain is Small ribosomal subunit protein uS9 from Hyphomonas neptunium (strain ATCC 15444).